We begin with the raw amino-acid sequence, 86 residues long: DNA-directed RNA polymerase subunit omega (86 aa).

The protein belongs to the RNA polymerase subunit omega family. As to quaternary structure, the RNAP catalytic core consists of 2 alpha, 1 beta, 1 beta' and 1 omega subunit. When a sigma factor is associated with the core the holoenzyme is formed, which can initiate transcription.

It carries out the reaction RNA(n) + a ribonucleoside 5'-triphosphate = RNA(n+1) + diphosphate. Its function is as follows. Promotes RNA polymerase assembly. Latches the N- and C-terminal regions of the beta' subunit thereby facilitating its interaction with the beta and alpha subunits. This is DNA-directed RNA polymerase subunit omega from Psychrobacter sp. (strain PRwf-1).